The chain runs to 691 residues: WD repeat-containing protein 48 homolog (691 aa).

WD repeat units follow at residues 27–82 (LHRS…PVQY), 88–130 (RHTD…YLDS), 133–168 (LHTD…NSNF), 180–219 (GCKN…KPMK), 222–261 (GHSD…NIAT), 264–303 (AHEE…KFQV), 306–347 (KEEA…QNSN), and 399–438 (SGAP…KVKE).

It belongs to the WD repeat WDR48 family. Interacts with usp-46; the interaction increases the catalytic activity of usp-46 in the presence of wdr-20.

Its function is as follows. Together with wdr-20, binds to and stimulates the activity of the deubiquitinating enzyme usp-46, leading to deubiquitination and stabilization of the glr-1 glutamate receptor. This is WD repeat-containing protein 48 homolog (wdr-48) from Caenorhabditis briggsae.